Here is a 654-residue protein sequence, read N- to C-terminus: uncharacterized protein (654 aa).

The segment covering 1 to 13 (MSNLILTPSNNGT) has biased composition (polar residues). Residues 1–23 (MSNLILTPSNNGTERPYRSRKTR) form a disordered region. Residues 25–54 (CDNCRLRKSRCVVESIGNPCLLCTQLKIPC) constitute a DNA-binding region (zn(2)-C6 fungal-type). Residues 63–96 (RNKQKKQQDSVSDDTPSEATTTTNDDRDPKYNAL) form a disordered region.

Its subcellular location is the cytoplasm. It localises to the nucleus. This is an uncharacterized protein from Schizosaccharomyces pombe (strain 972 / ATCC 24843) (Fission yeast).